The following is a 215-amino-acid chain: 3-demethoxyubiquinol 3-hydroxylase (215 aa).

The Fe cation site is built by Glu-64, Glu-94, His-97, Glu-146, Glu-178, and His-181.

Belongs to the COQ7 family. Requires Fe cation as cofactor.

The protein localises to the cell membrane. The catalysed reaction is a 5-methoxy-2-methyl-3-(all-trans-polyprenyl)benzene-1,4-diol + AH2 + O2 = a 3-demethylubiquinol + A + H2O. The protein operates within cofactor biosynthesis; ubiquinone biosynthesis. Catalyzes the hydroxylation of 2-nonaprenyl-3-methyl-6-methoxy-1,4-benzoquinol during ubiquinone biosynthesis. This Stutzerimonas stutzeri (strain A1501) (Pseudomonas stutzeri) protein is 3-demethoxyubiquinol 3-hydroxylase.